Here is a 1273-residue protein sequence, read N- to C-terminus: DNA-directed RNA polymerase subunit beta (1273 aa).

A disordered region spans residues 1252 to 1273 (ADDQDLVVSSNDEEVSENDERS).

This sequence belongs to the RNA polymerase beta chain family. In terms of assembly, the RNAP catalytic core consists of 2 alpha, 1 beta, 1 beta' and 1 omega subunit. When a sigma factor is associated with the core the holoenzyme is formed, which can initiate transcription.

It carries out the reaction RNA(n) + a ribonucleoside 5'-triphosphate = RNA(n+1) + diphosphate. Functionally, DNA-dependent RNA polymerase catalyzes the transcription of DNA into RNA using the four ribonucleoside triphosphates as substrates. This chain is DNA-directed RNA polymerase subunit beta, found in Dehalococcoides mccartyi (strain CBDB1).